Here is a 208-residue protein sequence, read N- to C-terminus: Large ribosomal subunit protein uL3 (208 aa).

An N5-methylglutamine modification is found at Gln149.

It belongs to the universal ribosomal protein uL3 family. As to quaternary structure, part of the 50S ribosomal subunit. Forms a cluster with proteins L14 and L19. Methylated by PrmB.

One of the primary rRNA binding proteins, it binds directly near the 3'-end of the 23S rRNA, where it nucleates assembly of the 50S subunit. In Haemophilus influenzae (strain PittGG), this protein is Large ribosomal subunit protein uL3.